We begin with the raw amino-acid sequence, 130 residues long: Small ribosomal subunit protein uS9 (130 aa).

The protein belongs to the universal ribosomal protein uS9 family.

The chain is Small ribosomal subunit protein uS9 from Bacillus thuringiensis subsp. konkukian (strain 97-27).